The following is a 241-amino-acid chain: Large ribosomal subunit protein uL3 (241 aa).

An N5-methylglutamine modification is found at glutamine 157.

The protein belongs to the universal ribosomal protein uL3 family. As to quaternary structure, part of the 50S ribosomal subunit. Forms a cluster with proteins L14 and L19. In terms of processing, methylated by PrmB.

Functionally, one of the primary rRNA binding proteins, it binds directly near the 3'-end of the 23S rRNA, where it nucleates assembly of the 50S subunit. The chain is Large ribosomal subunit protein uL3 from Vesicomyosocius okutanii subsp. Calyptogena okutanii (strain HA).